Here is a 308-residue protein sequence, read N- to C-terminus: Oxygen-dependent coproporphyrinogen-III oxidase (308 aa).

Ser97 serves as a coordination point for substrate. Residues His101 and His111 each contribute to the a divalent metal cation site. Catalysis depends on His111, which acts as the Proton donor. 113–115 (NVR) is a binding site for substrate. A divalent metal cation contacts are provided by His153 and His183. Positions 248 to 283 (YVEFNLVWDRGTHFGLQSGGRTESILMSMPPLASWS) are important for dimerization. Residue 266–268 (GGR) coordinates substrate.

Belongs to the aerobic coproporphyrinogen-III oxidase family. In terms of assembly, homodimer. It depends on a divalent metal cation as a cofactor.

The protein localises to the cytoplasm. The catalysed reaction is coproporphyrinogen III + O2 + 2 H(+) = protoporphyrinogen IX + 2 CO2 + 2 H2O. The protein operates within porphyrin-containing compound metabolism; protoporphyrin-IX biosynthesis; protoporphyrinogen-IX from coproporphyrinogen-III (O2 route): step 1/1. Involved in the heme biosynthesis. Catalyzes the aerobic oxidative decarboxylation of propionate groups of rings A and B of coproporphyrinogen-III to yield the vinyl groups in protoporphyrinogen-IX. The chain is Oxygen-dependent coproporphyrinogen-III oxidase from Polaromonas sp. (strain JS666 / ATCC BAA-500).